The chain runs to 448 residues: MNINAAPQILGRSSQDITPGYMSGFGNSFETEALPGALPVGRNSPQRCAYGLYAEQLSGSPFTAPRGANERSWLYRIRPSVKHSGRFAKTDMGLWRSAPCFEHDLPIAQLRWDPPPMPQEALTFLQGVRTMTTAGDVNTQAGMATHLYLITQSMVDQHFYNADGEMMFVPQQGSLRLVTEFGIITIEPAEIAVIPRGVKFRVELVDGPARGYLCENYGGAFTLPERGPIGANCLANSRDFLTPVAAYEDKDTPTELYVKWGGSLYVTKLPHSPIDVVAWHGNYAPYKYDLRTYSPVGAIGFDHPDPSIFTVLTSPSETPGTANIDFVIFPERWMVADNTFRPPWYHMNIMSEFMGLIYGVYDAKPQGFVPGGASLHNMMLPHGPDREAFDHASNGELKPVKLTGTMAFMFETRYPQRVTEYAASSGLLQDDYADCWNGLEKRFDPNRP.

Residue His303 is the Proton acceptor of the active site. Residues His346 and Glu352 each coordinate Fe cation. 2 residues coordinate homogentisate: Tyr361 and His382. Fe cation is bound at residue His382.

It belongs to the homogentisate dioxygenase family. As to quaternary structure, hexamer; dimer of trimers. The cofactor is Fe cation.

It carries out the reaction homogentisate + O2 = 4-maleylacetoacetate + H(+). The protein operates within amino-acid degradation; L-phenylalanine degradation; acetoacetate and fumarate from L-phenylalanine: step 4/6. In terms of biological role, involved in the catabolism of homogentisate (2,5-dihydroxyphenylacetate or 2,5-OH-PhAc), a central intermediate in the degradation of phenylalanine and tyrosine. Catalyzes the oxidative ring cleavage of the aromatic ring of homogentisate to yield maleylacetoacetate. The sequence is that of Homogentisate 1,2-dioxygenase from Rhodopseudomonas palustris (strain ATCC BAA-98 / CGA009).